Consider the following 217-residue polypeptide: Grancalcin (217 aa).

4 EF-hand domains span residues 48–83 (SSAG…SGIN), 89–122 (FSLE…AALN), 119–154 (AALN…MGYR), and 155–180 (LSPQ…DYVA). Ca(2+) is bound by residues Asp-65, Asp-69, and Glu-71. Ca(2+)-binding residues include Asp-132, Asp-134, Ser-136, Thr-138, and Glu-143.

Homodimer. Interacts with SRI and LCP1. In terms of tissue distribution, detected in neutrophils and macrophages (at protein level). Highly expressed in bone marrow.

The protein resides in the cytoplasm. The protein localises to the cytoplasmic granule membrane. Functionally, calcium-binding protein that may play a role in the adhesion of neutrophils to fibronectin. May play a role in the formation of focal adhesions. This chain is Grancalcin (GCA), found in Homo sapiens (Human).